The chain runs to 83 residues: Mu-theraphotoxin-Hhn2n (83 aa).

Residues 1–21 (MKASMYLALAGLVLLFVVGYA) form the signal peptide. A propeptide spanning residues 22–48 (SESEEKEFPRELLSKIFAVDDFKGEER) is cleaved from the precursor. 3 cysteine pairs are disulfide-bonded: Cys-50/Cys-65, Cys-57/Cys-70, and Cys-64/Cys-77. The residue at position 81 (Leu-81) is a Leucine amide.

Belongs to the neurotoxin 10 (Hwtx-1) family. 15 (Hntx-3) subfamily. Monomer. As to expression, expressed by the venom gland.

The protein resides in the secreted. In terms of biological role, lethal neurotoxin. Selectively blocks tetrodotoxin-sensitive voltage-gated sodium channels (Nav). Does not affect tetrodotoxin-resistant voltage-gated sodium channels or calcium channels. The protein is Mu-theraphotoxin-Hhn2n of Cyriopagopus hainanus (Chinese bird spider).